A 206-amino-acid polypeptide reads, in one-letter code: 2,3-bisphosphoglycerate-dependent phosphoglycerate mutase (206 aa).

Substrate-binding positions include 9-16 (RHGQSEWN), 22-23 (TG), Arg61, 88-91 (ERDY), Lys99, 115-116 (RR), and 159-160 (GN). Catalysis depends on His10, which acts as the Tele-phosphohistidine intermediate. Glu88 (proton donor/acceptor) is an active-site residue.

The protein belongs to the phosphoglycerate mutase family. BPG-dependent PGAM subfamily. As to quaternary structure, homodimer.

It carries out the reaction (2R)-2-phosphoglycerate = (2R)-3-phosphoglycerate. The protein operates within carbohydrate degradation; glycolysis; pyruvate from D-glyceraldehyde 3-phosphate: step 3/5. Catalyzes the interconversion of 2-phosphoglycerate and 3-phosphoglycerate. This Mesorhizobium japonicum (strain LMG 29417 / CECT 9101 / MAFF 303099) (Mesorhizobium loti (strain MAFF 303099)) protein is 2,3-bisphosphoglycerate-dependent phosphoglycerate mutase.